The chain runs to 120 residues: Large ribosomal subunit protein uL18 (120 aa).

Belongs to the universal ribosomal protein uL18 family. As to quaternary structure, part of the 50S ribosomal subunit; part of the 5S rRNA/L5/L18/L25 subcomplex. Contacts the 5S and 23S rRNAs.

Its function is as follows. This is one of the proteins that bind and probably mediate the attachment of the 5S RNA into the large ribosomal subunit, where it forms part of the central protuberance. The sequence is that of Large ribosomal subunit protein uL18 from Exiguobacterium sp. (strain ATCC BAA-1283 / AT1b).